Consider the following 335-residue polypeptide: Eukaryotic translation initiation factor 3 subunit I (335 aa).

5 WD repeats span residues 8 to 47 (GHER…RLGT), 50 to 91 (GHQG…KTWD), 145 to 184 (CAES…LLFN), 189 to 228 (EPDL…VMKT), and 286 to 325 (GHFG…FDFT).

It belongs to the eIF-3 subunit I family. As to quaternary structure, component of the eukaryotic translation initiation factor 3 (eIF-3) complex.

It localises to the cytoplasm. Its function is as follows. Component of the eukaryotic translation initiation factor 3 (eIF-3) complex, which is involved in protein synthesis of a specialized repertoire of mRNAs and, together with other initiation factors, stimulates binding of mRNA and methionyl-tRNAi to the 40S ribosome. The eIF-3 complex specifically targets and initiates translation of a subset of mRNAs involved in cell proliferation. This Botryotinia fuckeliana (strain B05.10) (Noble rot fungus) protein is Eukaryotic translation initiation factor 3 subunit I (tif34).